The following is a 286-amino-acid chain: 2,3,4,5-tetrahydropyridine-2,6-dicarboxylate N-succinyltransferase (286 aa).

Substrate contacts are provided by arginine 111 and aspartate 148.

This sequence belongs to the transferase hexapeptide repeat family. As to quaternary structure, homotrimer.

It localises to the cytoplasm. It catalyses the reaction (S)-2,3,4,5-tetrahydrodipicolinate + succinyl-CoA + H2O = (S)-2-succinylamino-6-oxoheptanedioate + CoA. The protein operates within amino-acid biosynthesis; L-lysine biosynthesis via DAP pathway; LL-2,6-diaminopimelate from (S)-tetrahydrodipicolinate (succinylase route): step 1/3. This Rhizobium etli (strain ATCC 51251 / DSM 11541 / JCM 21823 / NBRC 15573 / CFN 42) protein is 2,3,4,5-tetrahydropyridine-2,6-dicarboxylate N-succinyltransferase.